A 148-amino-acid polypeptide reads, in one-letter code: Transcriptional regulator MraZ (148 aa).

SpoVT-AbrB domains follow at residues 5–53 (ETAI…VEKE) and 82–125 (SALL…SEQA).

This sequence belongs to the MraZ family. As to quaternary structure, forms oligomers.

The protein localises to the cytoplasm. It is found in the nucleoid. The protein is Transcriptional regulator MraZ of Xylella fastidiosa (strain 9a5c).